A 211-amino-acid polypeptide reads, in one-letter code: Uracil phosphoribosyltransferase (211 aa).

Residues R79, R104, and 131 to 139 (DPMLATGGS) each bind 5-phospho-alpha-D-ribose 1-diphosphate. Uracil contacts are provided by residues I196 and 201 to 203 (GDA). D202 contributes to the 5-phospho-alpha-D-ribose 1-diphosphate binding site.

The protein belongs to the UPRTase family. The cofactor is Mg(2+).

The catalysed reaction is UMP + diphosphate = 5-phospho-alpha-D-ribose 1-diphosphate + uracil. The protein operates within pyrimidine metabolism; UMP biosynthesis via salvage pathway; UMP from uracil: step 1/1. With respect to regulation, allosterically activated by GTP. Its function is as follows. Catalyzes the conversion of uracil and 5-phospho-alpha-D-ribose 1-diphosphate (PRPP) to UMP and diphosphate. The protein is Uracil phosphoribosyltransferase of Limosilactobacillus fermentum (strain NBRC 3956 / LMG 18251) (Lactobacillus fermentum).